We begin with the raw amino-acid sequence, 302 residues long: Zygote arrest protein 2.S (302 aa).

Disordered regions lie at residues 15–46, 88–117, and 138–195; these read YGGN…SEPP, VDTG…PTDC, and LPQG…EPNK. Over residues 159 to 178 the composition is skewed to basic and acidic residues; it reads LKDRGPSPEEKEPETKEALE. The 3CxxC-type zinc finger occupies 203 to 288; that stretch reads QKYGYFHCKD…QELCGRCKNK (86 aa).

This sequence belongs to the ZAR1 family. As to expression, oocyte-specific.

Its subcellular location is the cytoplasm. It localises to the cytoplasmic ribonucleoprotein granule. Its function is as follows. mRNA-binding protein required for maternal mRNA storage, translation and degradation during oocyte maturation. Probably promotes formation of some phase-separated membraneless compartment that stores maternal mRNAs in oocytes: acts by undergoing liquid-liquid phase separation upon binding to maternal mRNAs. Binds to the 3'-UTR of maternal mRNAs, inhibiting their translation. The chain is Zygote arrest protein 2.S from Xenopus laevis (African clawed frog).